The sequence spans 417 residues: Sterile alpha motif domain-containing protein 14 (417 aa).

Residues 37-306 (LLVKGRRHRP…QETKCSYPYH (270 aa)) are disordered. Positions 40-49 (KGRRHRPSRS) are enriched in basic residues. Residues serine 84 and serine 108 each carry the phosphoserine modification. The segment covering 138–153 (SGSPPRSAPSSDSSPS) has biased composition (low complexity). Residues 159 to 173 (PRAEPHSEDDSRDAS) show a composition bias toward basic and acidic residues. A phosphoserine mark is found at serine 173 and serine 179. 2 stretches are compositionally biased toward low complexity: residues 244–260 (SGKGSASSGSTTSPTCS) and 276–289 (STLSDDSTPPSSSP). Serine 279 bears the Phosphoserine mark. Threonine 283 is subject to Phosphothreonine. Positions 326 to 389 (WTSQQVGQWL…KRKLKELAAA (64 aa)) constitute an SAM domain. A coiled-coil region spans residues 375-416 (DRALVKRKLKELAAAAEKERKAQEKTARQREKLRRREHEAKK). The tract at residues 390 to 417 (AEKERKAQEKTARQREKLRRREHEAKKS) is disordered.

The chain is Sterile alpha motif domain-containing protein 14 (Samd14) from Rattus norvegicus (Rat).